The following is a 95-amino-acid chain: Ubiquinol-cytochrome-c reductase complex assembly factor 3 (95 aa).

Over 1-7 (MTTLRKL) the chain is Mitochondrial matrix. The chain crosses the membrane as a helical span at residues 8–28 (LLVGALLGAGAGVGTALFALV). The interval 23–80 (ALFALVTPGEERKQAMLKEMPEQYPQRRDEAARTKELLLATLQEAAATQENVAWRKNW) is mediates lipid-binding. Residues 29 to 95 (TPGEERKQAM…GGGGGGGRSA (67 aa)) lie on the Mitochondrial intermembrane side of the membrane.

Belongs to the UQCC3 family. Associates with the ubiquinol-cytochrome c reductase complex (mitochondrial respiratory chain complex III(CIII) or cytochrome b-c1 complex). Interacts with UQCC1. Forms a complex, named COMC, composed of UQCC1, UQCC2; UQCC3 and UQCC4; mediates MT-CYB hemylation and association with the first nuclear-encoded complex III subunit UQCRQ. Post-translationally, probably cleaved by OMA1 under mitochondrial stress conditions.

The protein resides in the mitochondrion inner membrane. In terms of biological role, required for the assembly of the ubiquinol-cytochrome c reductase complex (mitochondrial respiratory chain complex III or cytochrome b-c1 complex), mediating cytochrome b recruitment and probably stabilization within the complex. Thereby, plays an important role in ATP production by mitochondria. Cardiolipin-binding protein, it may also control the cardiolipin composition of mitochondria membranes and their morphology. The protein is Ubiquinol-cytochrome-c reductase complex assembly factor 3 of Bos taurus (Bovine).